The chain runs to 293 residues: Ribosomal protein L11 methyltransferase (293 aa).

4 residues coordinate S-adenosyl-L-methionine: T145, G166, D188, and N230.

Belongs to the methyltransferase superfamily. PrmA family.

The protein localises to the cytoplasm. The enzyme catalyses L-lysyl-[protein] + 3 S-adenosyl-L-methionine = N(6),N(6),N(6)-trimethyl-L-lysyl-[protein] + 3 S-adenosyl-L-homocysteine + 3 H(+). Functionally, methylates ribosomal protein L11. The protein is Ribosomal protein L11 methyltransferase of Shewanella sediminis (strain HAW-EB3).